A 172-amino-acid chain; its full sequence is MAKHEMEDRGDGLVEKMISVNRVTKVVKGGRIMAFSALTVVGDGDGGIGMGKGRSKEVPVAVQKAMEQARHNMMKIKLYNGTVKHTVEGRHGATRVLIQPAKDGTGVKAGGPMRAIFDAMGIHNVSAKIHGSTNPYNVVRATLDGLSKINTPAQIAAKRGLSIEDILGVGHE.

The region spanning 13 to 76 (LVEKMISVNR…EQARHNMMKI (64 aa)) is the S5 DRBM domain.

This sequence belongs to the universal ribosomal protein uS5 family. Part of the 30S ribosomal subunit. Contacts proteins S4 and S8.

With S4 and S12 plays an important role in translational accuracy. In terms of biological role, located at the back of the 30S subunit body where it stabilizes the conformation of the head with respect to the body. The chain is Small ribosomal subunit protein uS5 from Chromobacterium violaceum (strain ATCC 12472 / DSM 30191 / JCM 1249 / CCUG 213 / NBRC 12614 / NCIMB 9131 / NCTC 9757 / MK).